A 415-amino-acid chain; its full sequence is MFMREIELKGHIIDSFILAKVFDRTLELGGDYKVLEFDIGKKKIDTSYAKLLISGDTQQHLDQILEELQNVGANIPEIENANLKPALKDSVLPDGFYSTTNHPTHVKVNDEWIEVANPKMDAVIVVYPEEKRAETKVIRKVKKGDFVLIGHNGIRVMPPEKSREAGQLFEFMNSEVSSEKPKEAIIKRIAKEMHEIREEYKKTGTGGIAIVGGPAIIHTGGGPALAKMVELGYIQAILAGNALATHDIESALYGTSLGVNIKTAKPVTGGHKHHIYAINAINDAGNIKNAVESGVLKEGIMYQCIKNNIPYVLAGSIRDDGPIPDVITDSMVAQDKMRTTVMDKKMVIMLSTLLHSVATGNLMPSYIKTVCVDIQPSTVTKLMDRGTSQAIGVVTDVGVFLVLLLKELERLELQE.

Residues Asn241, Ala242, Asp320, Thr352, Leu354, His355, Asp373, Asp396, and Val397 each coordinate NAD(+).

It belongs to the AgrE/ArgZ ornithine cyclodeaminase family. It depends on NAD(+) as a cofactor.

It carries out the reaction L-ornithine = L-proline + NH4(+). Catalyzes the conversion of ornithine to proline, with the release of ammonia. The chain is Ornithine cyclodeaminase from Methanococcus maripaludis (strain DSM 14266 / JCM 13030 / NBRC 101832 / S2 / LL).